A 304-amino-acid polypeptide reads, in one-letter code: uncharacterized protein (304 aa).

NAD(+) is bound by residues 136–137, 215–217, and aspartate 241; these read GI and VGR. Arginine 217 is an active-site residue. The active site involves glutamate 246. The active-site Proton donor is histidine 265. NAD(+) is bound at residue 265–268; sequence HTAN.

The protein belongs to the D-isomer specific 2-hydroxyacid dehydrogenase family.

This is an uncharacterized protein from Corynebacterium melassecola.